Reading from the N-terminus, the 215-residue chain is Ras-related protein Rab-5A (215 aa).

Residues S29, A30, G32, K33, S34, S35, H46, E47, T52, and G78 each coordinate GTP. S34 contacts Mg(2+). 2 consecutive short sequence motifs (switch) follow at residues 44 to 56 (QFHEFQESTIGAA) and 77 to 93 (AGQERYHSLAPMYYRGA). Residue T52 participates in Mg(2+) binding. S84 is modified (phosphoserine; by LRRK2). R120 carries a (Microbial infection) N-beta-linked (GlcNAc) arginine glycan. The GTP site is built by N133, K134, D136, A164, and K165. A disordered region spans residues 181 to 215 (LPKNEPQNPGANSARGRGVDLTEPTQPTRNQCCSN). Positions 203-215 (EPTQPTRNQCCSN) are enriched in polar residues. Residues C212 and C213 are each lipidated (S-geranylgeranyl cysteine).

This sequence belongs to the small GTPase superfamily. Rab family. In terms of assembly, interacts with SGSM1 and SGSM3. Interacts with PIK3CB. Interacts with GDI1; this promotes dissociation from membranes; phosphorylation at Ser-84 disrupts this interaction. Interacts with GDI2; phosphorylation at Ser-84 disrupts the interaction. Interacts with EEA1. Interacts with RIN1 and GAPVD1, which regulate its pathway, probably by acting as a GEF. Interacts with RINL. Interacts with ALS2CL, SUN2, ZFYVE20 and RUFY1. Interacts with RABEP1; one RABEP1 homodimer binds two RAB5A chains, but at opposite sides of the dimer. Interacts with OCRL. Interacts with INPP5F. May be a component of a complex composed of RAB5A, DYN2 and PIK3C3. Does not interact with BLOC-3 complex (heterodimer of HPS1 and HPS4). Interacts with CLN5. Interacts with APPL2. Interacts with F8A1/F8A2/F8A3. Found in a complex with F8A1/F8A2/F8A3, HTT and RAB5A; mediates the recruitment of HTT by RAB5A onto early endosomes. Interacts with ATP9A. Interacts with PPP1R21; mediates the recruitment of FERRY complex by RAB5A onto early endosomes. Mg(2+) is required as a cofactor. Post-translationally, phosphorylation of Ser-84 in the switch II region by LRRK2 prevents the association of RAB regulatory proteins, including RAB GDP dissociation inhibitors GDI1 and GDI2. In terms of processing, (Microbial infection) Glycosylated on arginine residues by S.typhimurium protein Ssek3.

It is found in the cell membrane. Its subcellular location is the early endosome membrane. The protein localises to the melanosome. It localises to the cytoplasmic vesicle. The protein resides in the cell projection. It is found in the ruffle. Its subcellular location is the membrane. The protein localises to the cytoplasm. It localises to the cytosol. The protein resides in the phagosome membrane. It is found in the endosome membrane. It catalyses the reaction GTP + H2O = GDP + phosphate + H(+). With respect to regulation, regulated by guanine nucleotide exchange factors (GEFs) including RINL, which promote the exchange of bound GDP for free GTP. Regulated by GTPase activating proteins (GAPs) which increase the GTP hydrolysis activity. Inhibited by GDP dissociation inhibitors (GDIs). Functionally, the small GTPases Rab are key regulators of intracellular membrane trafficking, from the formation of transport vesicles to their fusion with membranes. Rabs cycle between an inactive GDP-bound form and an active GTP-bound form that is able to recruit to membranes different sets of downstream effectors directly responsible for vesicle formation, movement, tethering and fusion. RAB5A is required for the fusion of plasma membranes and early endosomes. Contributes to the regulation of filopodia extension. Required for the exosomal release of SDCBP, CD63, PDCD6IP and syndecan. Regulates maturation of apoptotic cell-containing phagosomes, probably downstream of DYN2 and PIK3C3. This chain is Ras-related protein Rab-5A, found in Homo sapiens (Human).